The chain runs to 267 residues: Hydrolase FUB4 (267 aa).

Residues Ser93, Asp183, and His243 each act as charge relay system in the active site.

It belongs to the AB hydrolase 3 family.

The protein operates within mycotoxin biosynthesis. Functionally, hydrolase; part of the gene cluster that mediates the biosynthesis of fusaric acid, a mycotoxin with low to moderate toxicity to animals and humans, but with high phytotoxic properties. L-aspartate is suggested as fusaric acid amino acid precursor that is activated and further processed to O-acetyl-L-homoserine by cluster enzymes aspartate kinase FUB3 and homoserine O-acetyltransferase FUB5, as well as enzymes of the primary metabolism. The polyketide synthase (PKS) FUB1 generates the triketide trans-2-hexenal which is presumptively released by the hydrolase FUB4 and linked to the NRPS-bound amino acid precursor by NAD(P)-dependent dehydrogenase FUB6. FUB1, FUB4, and the non-canonical NRPS Fub8 may form an enzyme complex. Further processing of the NRPS-bound intermediate might be carried out by FUB6 and the sulfhydrylase FUB7, enabling a spontaneous electrocyclization to close the carbon backbone of fusaric acid. Dihydrofusaric acid is likely to be released via reduction by the thioester reductase (TR) domain of FUB8 whereupon the final oxidation to fusaric acid may (also) be performed by the FMN-dependent dehydrogenase FUB9. This chain is Hydrolase FUB4, found in Gibberella moniliformis (strain M3125 / FGSC 7600) (Maize ear and stalk rot fungus).